The following is a 445-amino-acid chain: Phosphatidate cytidylyltransferase 2 (445 aa).

The span at 1–39 (MTELRQRVAREPEAPPEDKESESEAKADGETASDSESRV) shows a compositional bias: basic and acidic residues. The tract at residues 1–52 (MTELRQRVAREPEAPPEDKESESEAKADGETASDSESRVEAVTQPPSADDTP) is disordered. Position 21 is a phosphoserine (S21). Residue T31 is modified to Phosphothreonine. Phosphoserine is present on residues S33, S35, and S37. T51 is modified (phosphothreonine). 6 helical membrane passes run 79–99 (MIAF…MIVM), 132–152 (FLLC…FFTL), 166–186 (HRFI…LSLV), 213–233 (LVIH…SCVI), 262–282 (GFIG…YVMS), and 340–360 (IALS…ASGF).

This sequence belongs to the CDS family. In terms of assembly, homodimer.

The protein localises to the endoplasmic reticulum membrane. It catalyses the reaction a 1,2-diacyl-sn-glycero-3-phosphate + CTP + H(+) = a CDP-1,2-diacyl-sn-glycerol + diphosphate. The catalysed reaction is 1-octadecanoyl-2-(5Z,8Z,11Z,14Z-eicosatetraenoyl)-sn-glycero-3-phosphate + CTP + H(+) = 1-octadecanoyl-2-(5Z,8Z,11Z,14Z-eicosatetraenoyl)-sn-glycero-3-cytidine-5'-diphosphate + diphosphate. It carries out the reaction 1-octadecanoyl-2-(9Z,12Z-octadecadienoyl)-sn-glycero-3-phosphate + CTP + H(+) = 1-octadecanoyl-2-(9Z,12Z-octadecadienoyl)-sn-glycero-3-cytidine-5'-diphosphate + diphosphate. The enzyme catalyses 1-hexadecanoyl-2-(5Z,8Z,11Z,14Z-eicosatetraenoyl)-sn-glycero-3-phosphate + CTP + H(+) = 1-hexadecanoyl-2-(5Z,8Z,11Z,14Z-eicosatetraenoyl)-sn-glycero-3-cytidine-5'-diphosphate + diphosphate. It catalyses the reaction 1,2-di-(5Z,8Z,11Z,14Z)-eicosatetraenoyl-sn-glycero-3-phosphate + CTP + H(+) = 1,2-di-(5Z,8Z,11Z,14Z-eicosatetraenoyl)-sn-glycero-3-cytidine-5'-diphosphate + diphosphate. The catalysed reaction is 1-octadecanoyl-2-(9Z-octadecenoyl)-sn-glycero-3-phosphate + CTP + H(+) = 1-octadecanoyl-2-(9Z-octadecenoyl)-sn-glycero-3-cytidine-5'-diphosphate + diphosphate. It carries out the reaction 1-octadecanoyl-2-(4Z,7Z,10Z,13Z,16Z,19Z-docosahexaenoyl)-sn-glycero-3-phosphate + CTP + H(+) = 1-octadecanoyl-2-(4Z,7Z,10Z,13Z,16Z,19Z-docosahexaenoyl)-sn-glycero-3-cytidine-5'-diphosphate + diphosphate. The enzyme catalyses 1,2-di-(9Z,12Z-octadecadienoyl)-sn-glycero-3-phosphate + CTP + H(+) = 1,2-di-(9Z,12Z-octadecadienoyl)-sn-glycero-3-cytidine-5'-diphosphate + diphosphate. It catalyses the reaction 1,2-di-(9Z-octadecenoyl)-sn-glycero-3-phosphate + CTP + H(+) = 1,2-di-(9Z-octadecenoyl)-sn-glycero-3-cytidine-5'-diphosphate + diphosphate. The protein operates within phospholipid metabolism; CDP-diacylglycerol biosynthesis; CDP-diacylglycerol from sn-glycerol 3-phosphate: step 3/3. Functionally, catalyzes the conversion of phosphatidic acid (PA) to CDP-diacylglycerol (CDP-DAG), an essential intermediate in the synthesis of phosphatidylglycerol, cardiolipin and phosphatidylinositol. Exhibits specificity for the nature of the acyl chains at the sn-1 and sn-2 positions in the substrate, PA and the preferred acyl chain composition is 1-stearoyl-2-arachidonoyl-sn-phosphatidic acid. Plays an important role in regulating the growth and maturation of lipid droplets which are storage organelles at the center of lipid and energy homeostasis. This is Phosphatidate cytidylyltransferase 2 (CDS2) from Bos taurus (Bovine).